A 614-amino-acid chain; its full sequence is BTB/POZ domain-containing protein At5g48800 (614 aa).

The region spanning Ser43–Ser111 is the BTB domain. Residues Asp219–Lys484 form the NPH3 domain. A Phosphotyrosine modification is found at Tyr425. Disordered stretches follow at residues Ser492–Tyr525 and Gly583–Asp614. The span at Ser507–Pro521 shows a compositional bias: polar residues. A coiled-coil region spans residues Lys522–Arg562. Low complexity predominate over residues Gly583–Ser597.

It belongs to the NPH3 family.

It functions in the pathway protein modification; protein ubiquitination. In terms of biological role, may act as a substrate-specific adapter of an E3 ubiquitin-protein ligase complex (CUL3-RBX1-BTB) which mediates the ubiquitination and subsequent proteasomal degradation of target proteins. This is BTB/POZ domain-containing protein At5g48800 from Arabidopsis thaliana (Mouse-ear cress).